A 431-amino-acid polypeptide reads, in one-letter code: tRNA(Ile)-lysidine synthase (431 aa).

20-25 is a binding site for ATP; sequence SGGLDS.

This sequence belongs to the tRNA(Ile)-lysidine synthase family.

It localises to the cytoplasm. The catalysed reaction is cytidine(34) in tRNA(Ile2) + L-lysine + ATP = lysidine(34) in tRNA(Ile2) + AMP + diphosphate + H(+). Its function is as follows. Ligates lysine onto the cytidine present at position 34 of the AUA codon-specific tRNA(Ile) that contains the anticodon CAU, in an ATP-dependent manner. Cytidine is converted to lysidine, thus changing the amino acid specificity of the tRNA from methionine to isoleucine. The chain is tRNA(Ile)-lysidine synthase from Escherichia coli O157:H7.